Consider the following 257-residue polypeptide: LexA repressor (257 aa).

Positions 64 to 84 (FREIGEAAGLKSPSSVKHQLQ) form a DNA-binding region, H-T-H motif. Residues Ser-181 and Lys-218 each act as for autocatalytic cleavage activity in the active site.

This sequence belongs to the peptidase S24 family. In terms of assembly, homodimer.

It carries out the reaction Hydrolysis of Ala-|-Gly bond in repressor LexA.. In terms of biological role, represses a number of genes involved in the response to DNA damage (SOS response), including recA and lexA. In the presence of single-stranded DNA, RecA interacts with LexA causing an autocatalytic cleavage which disrupts the DNA-binding part of LexA, leading to derepression of the SOS regulon and eventually DNA repair. This chain is LexA repressor, found in Bifidobacterium adolescentis (strain ATCC 15703 / DSM 20083 / NCTC 11814 / E194a).